We begin with the raw amino-acid sequence, 49 residues long: DNA-directed RNA polymerase subunit Rpo12 (49 aa).

Cysteine 11, cysteine 27, and cysteine 30 together coordinate Zn(2+).

This sequence belongs to the archaeal Rpo12/eukaryotic RPC10 RNA polymerase subunit family. As to quaternary structure, part of the RNA polymerase complex. Zn(2+) serves as cofactor.

It is found in the cytoplasm. It carries out the reaction RNA(n) + a ribonucleoside 5'-triphosphate = RNA(n+1) + diphosphate. Its function is as follows. DNA-dependent RNA polymerase (RNAP) catalyzes the transcription of DNA into RNA using the four ribonucleoside triphosphates as substrates. This Thermococcus onnurineus (strain NA1) protein is DNA-directed RNA polymerase subunit Rpo12.